A 97-amino-acid chain; its full sequence is Large ribosomal subunit protein uL23 (97 aa).

Belongs to the universal ribosomal protein uL23 family. In terms of assembly, part of the 50S ribosomal subunit. Contacts protein L29, and trigger factor when it is bound to the ribosome.

In terms of biological role, one of the early assembly proteins it binds 23S rRNA. One of the proteins that surrounds the polypeptide exit tunnel on the outside of the ribosome. Forms the main docking site for trigger factor binding to the ribosome. In Marinobacter nauticus (strain ATCC 700491 / DSM 11845 / VT8) (Marinobacter aquaeolei), this protein is Large ribosomal subunit protein uL23.